Reading from the N-terminus, the 150-residue chain is SsrA-binding protein (150 aa).

This sequence belongs to the SmpB family.

The protein localises to the cytoplasm. In terms of biological role, required for rescue of stalled ribosomes mediated by trans-translation. Binds to transfer-messenger RNA (tmRNA), required for stable association of tmRNA with ribosomes. tmRNA and SmpB together mimic tRNA shape, replacing the anticodon stem-loop with SmpB. tmRNA is encoded by the ssrA gene; the 2 termini fold to resemble tRNA(Ala) and it encodes a 'tag peptide', a short internal open reading frame. During trans-translation Ala-aminoacylated tmRNA acts like a tRNA, entering the A-site of stalled ribosomes, displacing the stalled mRNA. The ribosome then switches to translate the ORF on the tmRNA; the nascent peptide is terminated with the 'tag peptide' encoded by the tmRNA and targeted for degradation. The ribosome is freed to recommence translation, which seems to be the essential function of trans-translation. The protein is SsrA-binding protein of Rubrobacter xylanophilus (strain DSM 9941 / JCM 11954 / NBRC 16129 / PRD-1).